Here is a 133-residue protein sequence, read N- to C-terminus: Ribosome-binding factor A (133 aa).

It belongs to the RbfA family. In terms of assembly, monomer. Binds 30S ribosomal subunits, but not 50S ribosomal subunits or 70S ribosomes.

It is found in the cytoplasm. Functionally, one of several proteins that assist in the late maturation steps of the functional core of the 30S ribosomal subunit. Associates with free 30S ribosomal subunits (but not with 30S subunits that are part of 70S ribosomes or polysomes). Required for efficient processing of 16S rRNA. May interact with the 5'-terminal helix region of 16S rRNA. The chain is Ribosome-binding factor A from Acinetobacter baumannii (strain AB307-0294).